We begin with the raw amino-acid sequence, 342 residues long: Cyclin-dependent kinase-like 4 (342 aa).

The Protein kinase domain maps to 4–286; the sequence is YEKLAKIGEG…CAQLLDSAYF (283 aa). Residues 10–18 and Lys-33 each bind ATP; that span reads IGEGSYGVV. The short motif at 45-51 is the [NKR]KIAxRE element; it reads RKIALRE. The Proton acceptor role is filled by Asp-126. Positions 295 to 328 are disordered; sequence KRKARSEGRSRRRQQNQLLPLIPGSHISPTPDGR.

The protein belongs to the protein kinase superfamily. CMGC Ser/Thr protein kinase family. CDC2/CDKX subfamily.

Its subcellular location is the cytoplasm. It carries out the reaction L-seryl-[protein] + ATP = O-phospho-L-seryl-[protein] + ADP + H(+). The catalysed reaction is L-threonyl-[protein] + ATP = O-phospho-L-threonyl-[protein] + ADP + H(+). In Mus musculus (Mouse), this protein is Cyclin-dependent kinase-like 4 (Cdkl4).